Here is a 510-residue protein sequence, read N- to C-terminus: Mitochondrial metal transporter 1 (510 aa).

The segment at 120–141 (ADKPSSLNLHSHTHSHGHTHSH) is disordered. The span at 130-141 (SHTHSHGHTHSH) shows a compositional bias: basic residues. The next 6 membrane-spanning stretches (helical) occupy residues 165 to 185 (WVGLGVNVGIAIGKFFGGIVF), 194 to 214 (AIHAISDMVSDLLTLLSVGLA), 241 to 261 (LAMAGISIGWSSLCALVGPVI), 286 to 306 (VTDINAAWIAAASIAAKEWIF), 333 to 353 (LTSLVALVAISTGYLVNIQSL), and 356 to 376 (IGGLIVSGLIIKAGGEGMCIA).

The protein belongs to the cation diffusion facilitator (CDF) transporter (TC 2.A.4) family. SLC30A subfamily.

It is found in the mitochondrion membrane. Its function is as follows. Mitochondrial metal transporter involved in mitochondrial iron accumulation. This Saccharomyces cerevisiae (strain ATCC 204508 / S288c) (Baker's yeast) protein is Mitochondrial metal transporter 1 (MMT1).